Here is a 60-residue protein sequence, read N- to C-terminus: Large ribosomal subunit protein uL30 (60 aa).

It belongs to the universal ribosomal protein uL30 family. In terms of assembly, part of the 50S ribosomal subunit.

The polypeptide is Large ribosomal subunit protein uL30 (Desulfotalea psychrophila (strain LSv54 / DSM 12343)).